A 390-amino-acid chain; its full sequence is Cytochrome c-type protein TorC (390 aa).

The Cytoplasmic portion of the chain corresponds to 1-16; sequence MRKLWNALRRPSARWS. Residues 17-37 form a helical membrane-spanning segment; sequence VLALVAIGIVIGIALIVLPHV. The Periplasmic portion of the chain corresponds to 38–390; the sequence is GIKVTSTTEF…KAHGDKKEEK (353 aa). Cys48, Cys51, His52, Cys77, Cys80, His81, Cys138, Cys141, His142, Cys170, Cys173, His174, Cys329, Cys332, and His333 together coordinate heme.

Belongs to the TorC/TorY family. The N-terminal domain interacts with TorA. The immature C-terminal domain can bind to the N-terminal detector region of TorS. In terms of processing, binds 5 heme groups per subunit.

Its subcellular location is the cell inner membrane. Part of the anaerobic respiratory chain of trimethylamine-N-oxide reductase TorA. Acts by transferring electrons from the membranous menaquinones to TorA. This transfer probably involves an electron transfer pathway from menaquinones to the N-terminal domain of TorC, then from the N-terminus to the C-terminus, and finally to TorA. TorC apocytochrome negatively autoregulates the torCAD operon probably by inhibiting the TorS kinase activity. This is Cytochrome c-type protein TorC (torC) from Escherichia coli (strain K12).